We begin with the raw amino-acid sequence, 161 residues long: Crossover junction endodeoxyribonuclease RuvC (161 aa).

Catalysis depends on residues aspartate 9, glutamate 72, and aspartate 144. The Mg(2+) site is built by aspartate 9, glutamate 72, and aspartate 144.

It belongs to the RuvC family. In terms of assembly, homodimer which binds Holliday junction (HJ) DNA. The HJ becomes 2-fold symmetrical on binding to RuvC with unstacked arms; it has a different conformation from HJ DNA in complex with RuvA. In the full resolvosome a probable DNA-RuvA(4)-RuvB(12)-RuvC(2) complex forms which resolves the HJ. The cofactor is Mg(2+).

The protein resides in the cytoplasm. It carries out the reaction Endonucleolytic cleavage at a junction such as a reciprocal single-stranded crossover between two homologous DNA duplexes (Holliday junction).. Functionally, the RuvA-RuvB-RuvC complex processes Holliday junction (HJ) DNA during genetic recombination and DNA repair. Endonuclease that resolves HJ intermediates. Cleaves cruciform DNA by making single-stranded nicks across the HJ at symmetrical positions within the homologous arms, yielding a 5'-phosphate and a 3'-hydroxyl group; requires a central core of homology in the junction. The consensus cleavage sequence is 5'-(A/T)TT(C/G)-3'. Cleavage occurs on the 3'-side of the TT dinucleotide at the point of strand exchange. HJ branch migration catalyzed by RuvA-RuvB allows RuvC to scan DNA until it finds its consensus sequence, where it cleaves and resolves the cruciform DNA. This Synechococcus sp. (strain ATCC 27144 / PCC 6301 / SAUG 1402/1) (Anacystis nidulans) protein is Crossover junction endodeoxyribonuclease RuvC.